A 260-amino-acid chain; its full sequence is MGDSILFTVKNEHMALITLNRPQAANALSAEMLRNLQMIIQEIEFNSNIRCVILTGTGEKAFCAGADLKERIKLKEDQVLESVSLIQRTAALLDALPQPVIAAINGSALGGGLELALACDLRIATEAAVLGLPETGLAIIPGAGGTQRLPRLIGRGKAKEFIYTGRRVTAHEAKEIGLVEHVTAPCDLMPKAEELAAAISANGPIAVRQAKFAINKGLETDLATGLAIEQKAYEQTIPTKDRREGLQAFQEKRRAVYKGI.

It belongs to the enoyl-CoA hydratase/isomerase family.

The polypeptide is Putative enoyl-CoA hydratase/isomerase YngF (yngF) (Bacillus subtilis (strain 168)).